A 564-amino-acid chain; its full sequence is Dihydropyrimidinase-related protein 5 (564 aa).

T509 and T514 each carry phosphothreonine. Phosphoserine occurs at positions 532 and 538. The residue at position 559 (R559) is an Omega-N-methylarginine.

It belongs to the metallo-dependent hydrolases superfamily. Hydantoinase/dihydropyrimidinase family. In terms of assembly, homotetramer, and heterotetramer with other DPYS-like proteins. Interacts with DPYSL2, DPYSL3 and DPYSL4. Interacts with SEPTIN4 isoform 4. Interacts with MAP2 and TUBB3. As to expression, detected in brain.

The protein localises to the cytoplasm. Functionally, involved in the negative regulation of dendrite outgrowth. The protein is Dihydropyrimidinase-related protein 5 (Dpysl5) of Mus musculus (Mouse).